The primary structure comprises 207 residues: Large ribosomal subunit protein uL4 (207 aa).

It belongs to the universal ribosomal protein uL4 family. Part of the 50S ribosomal subunit.

In terms of biological role, one of the primary rRNA binding proteins, this protein initially binds near the 5'-end of the 23S rRNA. It is important during the early stages of 50S assembly. It makes multiple contacts with different domains of the 23S rRNA in the assembled 50S subunit and ribosome. Forms part of the polypeptide exit tunnel. This is Large ribosomal subunit protein uL4 from Rickettsia peacockii (strain Rustic).